The following is a 650-amino-acid chain: DNA gyrase subunit B (650 aa).

Residues 400-414 (RRSQEARELTRRKSP) are compositionally biased toward basic and acidic residues. The interval 400-422 (RRSQEARELTRRKSPFDSGSLPG) is disordered. The region spanning 435-549 (SELYIVEGDS…QGNIYIAQPP (115 aa)) is the Toprim domain. The Mg(2+) site is built by glutamate 441, aspartate 514, and aspartate 516.

It belongs to the type II topoisomerase GyrB family. In terms of assembly, heterotetramer, composed of two GyrA and two GyrB chains. In the heterotetramer, GyrA contains the active site tyrosine that forms a transient covalent intermediate with DNA, while GyrB binds cofactors and catalyzes ATP hydrolysis. It depends on Mg(2+) as a cofactor. Mn(2+) is required as a cofactor. Requires Ca(2+) as cofactor.

It is found in the cytoplasm. The catalysed reaction is ATP-dependent breakage, passage and rejoining of double-stranded DNA.. Its function is as follows. A type II topoisomerase that negatively supercoils closed circular double-stranded (ds) DNA in an ATP-dependent manner to modulate DNA topology and maintain chromosomes in an underwound state. Negative supercoiling favors strand separation, and DNA replication, transcription, recombination and repair, all of which involve strand separation. Also able to catalyze the interconversion of other topological isomers of dsDNA rings, including catenanes and knotted rings. Type II topoisomerases break and join 2 DNA strands simultaneously in an ATP-dependent manner. In Mycoplasma pneumoniae (strain ATCC 29342 / M129 / Subtype 1) (Mycoplasmoides pneumoniae), this protein is DNA gyrase subunit B.